We begin with the raw amino-acid sequence, 349 residues long: N-acetyl-gamma-glutamyl-phosphate reductase (349 aa).

The active site involves C149.

This sequence belongs to the NAGSA dehydrogenase family. Type 1 subfamily.

Its subcellular location is the cytoplasm. The catalysed reaction is N-acetyl-L-glutamate 5-semialdehyde + phosphate + NADP(+) = N-acetyl-L-glutamyl 5-phosphate + NADPH + H(+). It participates in amino-acid biosynthesis; L-arginine biosynthesis; N(2)-acetyl-L-ornithine from L-glutamate: step 3/4. Functionally, catalyzes the NADPH-dependent reduction of N-acetyl-5-glutamyl phosphate to yield N-acetyl-L-glutamate 5-semialdehyde. The polypeptide is N-acetyl-gamma-glutamyl-phosphate reductase (Acinetobacter baylyi (strain ATCC 33305 / BD413 / ADP1)).